The chain runs to 399 residues: Ribonucleoside-diphosphate reductase small chain 1 (399 aa).

Phosphoserine is present on residues serine 15, serine 24, and serine 41. Fe cation-binding residues include aspartate 145, glutamate 176, and histidine 179. Tyrosine 183 is a catalytic residue. Positions 239, 273, and 276 each coordinate Fe cation.

Belongs to the ribonucleoside diphosphate reductase small chain family. In terms of assembly, heterotetramer of two large (R1) and two small (R2) subunits. S.cerevisiae has two different R1 subunits (RNR1 and RNR3) and two different R2 subunits (RNR2 and RNR4). The functional form of the small subunits is a RNR2-RNR4 heterodimer, where RNR2 provides the iron-radical center and RNR4 is required for proper folding of RNR2 and assembly with the large subunits. Under normal growth conditions, the active form of the large subunits is a homodimer of the constitutively expressed RNR1. In damaged cells or cells arrested for DNA synthesis, the reductase consists of multiple species because of the association of the small subunits (RNR2-RNR4) with either the RNR1 homodimer or a heterodimer of RNR1 and the damage-inducible RNR3. Interacts with DIF1. Fe cation serves as cofactor.

It localises to the nucleus. The catalysed reaction is a 2'-deoxyribonucleoside 5'-diphosphate + [thioredoxin]-disulfide + H2O = a ribonucleoside 5'-diphosphate + [thioredoxin]-dithiol. Its function is as follows. Provides the precursors necessary for DNA synthesis. Catalyzes the biosynthesis of deoxyribonucleotides from the corresponding ribonucleotides. RNR2 provides the diiron-tyrosyl radical center. The sequence is that of Ribonucleoside-diphosphate reductase small chain 1 (RNR2) from Saccharomyces cerevisiae (strain ATCC 204508 / S288c) (Baker's yeast).